A 308-amino-acid polypeptide reads, in one-letter code: Cis-prenyltransferase 4, chloroplastic (308 aa).

A chloroplast-targeting transit peptide spans methionine 1–alanine 45. Aspartate 84 is an active-site residue.

This sequence belongs to the UPP synthase family. Mg(2+) serves as cofactor. Widely expressed.

It is found in the plastid. The protein localises to the chloroplast. Functionally, uses neryl diphosphate and geranyl diphosphate to catalyze the cis-prenyl chain elongation and produce polyprenyl diphosphate with a chain of 55 carbons. The sequence is that of Cis-prenyltransferase 4, chloroplastic from Solanum lycopersicum (Tomato).